A 99-amino-acid chain; its full sequence is Cell division protein FtsB (99 aa).

The Cytoplasmic segment spans residues 1–3; the sequence is MRV. A helical membrane pass occupies residues 4 to 21; the sequence is FTAILLILLVLLQYRLWF. Residues 22 to 99 lie on the Periplasmic side of the membrane; it reads GKNSVPDYLV…KENSTRNVNN (78 aa). A coiled-coil region spans residues 29–53; sequence YLVLKENVVRQQSANEKLQQRNKLL.

Belongs to the FtsB family. As to quaternary structure, part of a complex composed of FtsB, FtsL and FtsQ.

It localises to the cell inner membrane. Its function is as follows. Essential cell division protein. May link together the upstream cell division proteins, which are predominantly cytoplasmic, with the downstream cell division proteins, which are predominantly periplasmic. This chain is Cell division protein FtsB, found in Colwellia psychrerythraea (strain 34H / ATCC BAA-681) (Vibrio psychroerythus).